Consider the following 419-residue polypeptide: Tyrosine--tRNA ligase (419 aa).

Tyr-34 provides a ligand contact to L-tyrosine. The 'HIGH' region motif lies at 39-48; sequence PTADSLHLGH. The L-tyrosine site is built by Tyr-169 and Gln-173. The short motif at 229 to 233 is the 'KMSKS' region element; sequence KFGKS. Lys-232 serves as a coordination point for ATP. Residues 352 to 419 enclose the S4 RNA-binding domain; sequence LNIIDLLVTS…KKKYFVLNFK (68 aa).

The protein belongs to the class-I aminoacyl-tRNA synthetase family. TyrS type 1 subfamily. As to quaternary structure, homodimer.

The protein resides in the cytoplasm. The catalysed reaction is tRNA(Tyr) + L-tyrosine + ATP = L-tyrosyl-tRNA(Tyr) + AMP + diphosphate + H(+). Catalyzes the attachment of tyrosine to tRNA(Tyr) in a two-step reaction: tyrosine is first activated by ATP to form Tyr-AMP and then transferred to the acceptor end of tRNA(Tyr). The sequence is that of Tyrosine--tRNA ligase from Streptococcus agalactiae serotype V (strain ATCC BAA-611 / 2603 V/R).